Consider the following 488-residue polypeptide: L-arabinose isomerase 1 (488 aa).

Residues Glu-306, Glu-331, His-348, and His-447 each coordinate Mn(2+).

The protein belongs to the arabinose isomerase family. Mn(2+) is required as a cofactor.

It catalyses the reaction beta-L-arabinopyranose = L-ribulose. It functions in the pathway carbohydrate degradation; L-arabinose degradation via L-ribulose; D-xylulose 5-phosphate from L-arabinose (bacterial route): step 1/3. Its function is as follows. Catalyzes the conversion of L-arabinose to L-ribulose. The protein is L-arabinose isomerase 1 of Clostridium acetobutylicum (strain ATCC 824 / DSM 792 / JCM 1419 / IAM 19013 / LMG 5710 / NBRC 13948 / NRRL B-527 / VKM B-1787 / 2291 / W).